Consider the following 513-residue polypeptide: Na(+)/H(+) antiporter NhaB (513 aa).

11 helical membrane passes run isoleucine 21–isoleucine 41, isoleucine 88–methionine 108, leucine 119–phenylalanine 139, phenylalanine 143–valine 163, valine 208–alanine 228, leucine 247–glycine 267, alanine 303–isoleucine 323, leucine 357–isoleucine 377, leucine 389–alanine 409, alanine 447–isoleucine 467, and methionine 477–leucine 497.

This sequence belongs to the NhaB Na(+)/H(+) (TC 2.A.34) antiporter family.

It localises to the cell inner membrane. The catalysed reaction is 2 Na(+)(in) + 3 H(+)(out) = 2 Na(+)(out) + 3 H(+)(in). Functionally, na(+)/H(+) antiporter that extrudes sodium in exchange for external protons. This chain is Na(+)/H(+) antiporter NhaB, found in Pasteurella multocida (strain Pm70).